The chain runs to 271 residues: ATP synthase subunit a (271 aa).

5 consecutive transmembrane segments (helical) span residues 40 to 60 (TINI…LVLF), 100 to 120 (LIAP…LMDL), 146 to 166 (DVNV…FYSI), 220 to 240 (LIFI…LNVP), and 242 to 262 (AIFH…LTIV).

The protein belongs to the ATPase A chain family. F-type ATPases have 2 components, CF(1) - the catalytic core - and CF(0) - the membrane proton channel. CF(1) has five subunits: alpha(3), beta(3), gamma(1), delta(1), epsilon(1). CF(0) has three main subunits: a(1), b(2) and c(9-12). The alpha and beta chains form an alternating ring which encloses part of the gamma chain. CF(1) is attached to CF(0) by a central stalk formed by the gamma and epsilon chains, while a peripheral stalk is formed by the delta and b chains.

The protein localises to the cell inner membrane. In terms of biological role, key component of the proton channel; it plays a direct role in the translocation of protons across the membrane. The protein is ATP synthase subunit a of Escherichia coli O1:K1 / APEC.